A 119-amino-acid polypeptide reads, in one-letter code: Hydrogenase maturation factor HypA (119 aa).

H2 contacts Ni(2+). Zn(2+) is bound by residues C73, C76, C89, and C92.

The protein belongs to the HypA/HybF family.

In terms of biological role, involved in the maturation of [NiFe] hydrogenases. Required for nickel insertion into the metal center of the hydrogenase. The sequence is that of Hydrogenase maturation factor HypA from Dehalococcoides mccartyi (strain ATCC BAA-2100 / JCM 16839 / KCTC 5957 / BAV1).